A 134-amino-acid polypeptide reads, in one-letter code: MVKIRLKRAGRKKMPFYQIVAADGRAPRDGKFLEVIGHYNPTAKPHAVTIEKDRVAYWLNVGAQPTATAHSLIRATGLLHEMNLKRRGVSEADIATEMEAWQQREAERRQKRLTAKTRRRQAKKAAEAAGSAEG.

The interval 105 to 134 (EAERRQKRLTAKTRRRQAKKAAEAAGSAEG) is disordered. The segment covering 109–123 (RQKRLTAKTRRRQAK) has biased composition (basic residues).

It belongs to the bacterial ribosomal protein bS16 family.

In Chlorobaculum parvum (strain DSM 263 / NCIMB 8327) (Chlorobium vibrioforme subsp. thiosulfatophilum), this protein is Small ribosomal subunit protein bS16.